Reading from the N-terminus, the 206-residue chain is Large ribosomal subunit protein uL4 (206 aa).

The protein belongs to the universal ribosomal protein uL4 family. As to quaternary structure, part of the 50S ribosomal subunit.

Its function is as follows. One of the primary rRNA binding proteins, this protein initially binds near the 5'-end of the 23S rRNA. It is important during the early stages of 50S assembly. It makes multiple contacts with different domains of the 23S rRNA in the assembled 50S subunit and ribosome. Functionally, forms part of the polypeptide exit tunnel. This is Large ribosomal subunit protein uL4 from Afipia carboxidovorans (strain ATCC 49405 / DSM 1227 / KCTC 32145 / OM5) (Oligotropha carboxidovorans).